Here is a 59-residue protein sequence, read N- to C-terminus: Ferredoxin (59 aa).

In terms of domain architecture, 4Fe-4S ferredoxin-type spans 2 to 29 (KVSVDKDACIGCGVCASICPDVFEMDDD). Residues Cys10, Cys13, and Cys16 each contribute to the [4Fe-4S] cluster site. A disulfide bridge connects residues Cys20 and Cys43. Cys51 provides a ligand contact to [4Fe-4S] cluster.

It depends on [4Fe-4S] cluster as a cofactor. The cofactor is [3Fe-4S] cluster.

In terms of biological role, ferredoxins are iron-sulfur proteins that transfer electrons in a wide variety of metabolic reactions. The polypeptide is Ferredoxin (Thermococcus litoralis).